The following is a 473-amino-acid chain: Photosystem II CP43 reaction center protein (473 aa).

The propeptide occupies 1–14; the sequence is MKTLYSLRRFYPVE. Threonine 15 is modified (N-acetylthreonine). A Phosphothreonine modification is found at threonine 15. 5 helical membrane passes run 69–93, 134–155, 178–200, 255–275, and 291–312; these read LFEV…PHLA, LLGP…KDRN, KALY…RRIT, KPFA…LSYS, and WFNN…ASQA. Residue glutamate 367 coordinates [CaMn4O5] cluster. A helical transmembrane segment spans residues 447–471; the sequence is RARAAAAGFEKGIDRDFEPVLSMTP.

It belongs to the PsbB/PsbC family. PsbC subfamily. As to quaternary structure, PSII is composed of 1 copy each of membrane proteins PsbA, PsbB, PsbC, PsbD, PsbE, PsbF, PsbH, PsbI, PsbJ, PsbK, PsbL, PsbM, PsbT, PsbX, PsbY, PsbZ, Psb30/Ycf12, at least 3 peripheral proteins of the oxygen-evolving complex and a large number of cofactors. It forms dimeric complexes. The cofactor is Binds multiple chlorophylls and provides some of the ligands for the Ca-4Mn-5O cluster of the oxygen-evolving complex. It may also provide a ligand for a Cl- that is required for oxygen evolution. PSII binds additional chlorophylls, carotenoids and specific lipids..

It localises to the plastid. It is found in the chloroplast thylakoid membrane. Its function is as follows. One of the components of the core complex of photosystem II (PSII). It binds chlorophyll and helps catalyze the primary light-induced photochemical processes of PSII. PSII is a light-driven water:plastoquinone oxidoreductase, using light energy to abstract electrons from H(2)O, generating O(2) and a proton gradient subsequently used for ATP formation. This is Photosystem II CP43 reaction center protein from Illicium oligandrum (Star anise).